The primary structure comprises 160 residues: 6,7-dimethyl-8-ribityllumazine synthase (160 aa).

5-amino-6-(D-ribitylamino)uracil contacts are provided by residues Trp-28, 59–61, and 82–84; these read SFE and VII. 87–88 contributes to the (2S)-2-hydroxy-3-oxobutyl phosphate binding site; sequence GT. His-90 (proton donor) is an active-site residue. Residue Phe-115 coordinates 5-amino-6-(D-ribitylamino)uracil. (2S)-2-hydroxy-3-oxobutyl phosphate is bound at residue Arg-129.

This sequence belongs to the DMRL synthase family.

It carries out the reaction (2S)-2-hydroxy-3-oxobutyl phosphate + 5-amino-6-(D-ribitylamino)uracil = 6,7-dimethyl-8-(1-D-ribityl)lumazine + phosphate + 2 H2O + H(+). It functions in the pathway cofactor biosynthesis; riboflavin biosynthesis; riboflavin from 2-hydroxy-3-oxobutyl phosphate and 5-amino-6-(D-ribitylamino)uracil: step 1/2. In terms of biological role, catalyzes the formation of 6,7-dimethyl-8-ribityllumazine by condensation of 5-amino-6-(D-ribitylamino)uracil with 3,4-dihydroxy-2-butanone 4-phosphate. This is the penultimate step in the biosynthesis of riboflavin. This is 6,7-dimethyl-8-ribityllumazine synthase from Clavibacter michiganensis subsp. michiganensis (strain NCPPB 382).